A 364-amino-acid polypeptide reads, in one-letter code: Anhydro-N-acetylmuramic acid kinase (364 aa).

Residue 11–18 (GSSLDGID) coordinates ATP.

Belongs to the anhydro-N-acetylmuramic acid kinase family.

The enzyme catalyses 1,6-anhydro-N-acetyl-beta-muramate + ATP + H2O = N-acetyl-D-muramate 6-phosphate + ADP + H(+). The protein operates within amino-sugar metabolism; 1,6-anhydro-N-acetylmuramate degradation. It functions in the pathway cell wall biogenesis; peptidoglycan recycling. Its function is as follows. Catalyzes the specific phosphorylation of 1,6-anhydro-N-acetylmuramic acid (anhMurNAc) with the simultaneous cleavage of the 1,6-anhydro ring, generating MurNAc-6-P. Is required for the utilization of anhMurNAc either imported from the medium or derived from its own cell wall murein, and thus plays a role in cell wall recycling. The sequence is that of Anhydro-N-acetylmuramic acid kinase from Pseudomonas savastanoi pv. phaseolicola (strain 1448A / Race 6) (Pseudomonas syringae pv. phaseolicola (strain 1448A / Race 6)).